The chain runs to 222 residues: Eukaryotic translation initiation factor 3 subunit K (222 aa).

One can recognise a PCI domain in the interval 46–208 (YDLEANLAVL…KIKTKNITEK (163 aa)).

Belongs to the eIF-3 subunit K family. As to quaternary structure, component of the eukaryotic translation initiation factor 3 (eIF-3) complex. The eIF-3 complex interacts with pix.

The protein localises to the cytoplasm. Functionally, component of the eukaryotic translation initiation factor 3 (eIF-3) complex, which is involved in protein synthesis of a specialized repertoire of mRNAs and, together with other initiation factors, stimulates binding of mRNA and methionyl-tRNAi to the 40S ribosome. The eIF-3 complex specifically targets and initiates translation of a subset of mRNAs involved in cell proliferation. This is Eukaryotic translation initiation factor 3 subunit K from Drosophila sechellia (Fruit fly).